The chain runs to 470 residues: GTPase Der (470 aa).

2 consecutive EngA-type G domains span residues 32–195 (PVVA…PTIS) and 206–379 (RRVA…KSWD). GTP is bound by residues 38 to 45 (GRPNVGKS), 85 to 89 (DTGGW), 147 to 150 (NKVD), 212 to 219 (GKPNVGKS), 259 to 263 (DTAGL), and 324 to 327 (NKWD). In terms of domain architecture, KH-like spans 380–462 (TRVSTGRLNT…PIRINVRVRE (83 aa)).

The protein belongs to the TRAFAC class TrmE-Era-EngA-EngB-Septin-like GTPase superfamily. EngA (Der) GTPase family. Associates with the 50S ribosomal subunit.

Its function is as follows. GTPase that plays an essential role in the late steps of ribosome biogenesis. The protein is GTPase Der of Mycolicibacterium vanbaalenii (strain DSM 7251 / JCM 13017 / BCRC 16820 / KCTC 9966 / NRRL B-24157 / PYR-1) (Mycobacterium vanbaalenii).